Consider the following 533-residue polypeptide: Probable intron-encoded endonuclease 3 (533 aa).

Transmembrane regions (helical) follow at residues 1 to 21 (MYLSIIILPLLGSIVAGFFGR), 30 to 50 (LITCLSVIITTGLAILAFFEV), and 81 to 101 (LTVAMLIPVLIISSLVHIYSI). Residues 1-108 (MYLSIIILPL…YSISYMSHDP (108 aa)) are ndh-5 exon 1 encoded. Positions 109–533 (RGRVRGKRVY…SISLLLGRRR (425 aa)) are ndh-5 intron 1 encoded.

In the N-terminal section; belongs to the complex I subunit 5 family. It in the C-terminal section; belongs to the LAGLIDADG endonuclease family.

Its subcellular location is the mitochondrion membrane. Mitochondrial DNA endonuclease involved in intron homing. This is Probable intron-encoded endonuclease 3 from Neurospora crassa (strain ATCC 24698 / 74-OR23-1A / CBS 708.71 / DSM 1257 / FGSC 987).